We begin with the raw amino-acid sequence, 436 residues long: Lactonohydrolase oryL (436 aa).

The first 27 residues, 1–27 (MLSYTSHCLQALLGVASLPYRQYQAYS), serve as a signal peptide directing secretion.

This sequence belongs to the SMP-30/CGR1 family.

It functions in the pathway secondary metabolite biosynthesis. Functionally, lactonohydrolase; part of the gene cluster that mediates the biosynthesis of oryzines, natural products with an unusual maleidride backbone. The two subunits of the fungal fatty acid synthase oryfasA and oryfasB probably form octenoic acid. This fatty acid is most likely activated by the acyl-CoA ligase oryP to give octenyl-CoA before the citrate synthase-like protein oryE catalyzes condensation with oxaloacetate to form tricarboxylic acid. The next steps of the pathways are conjectural, but a favorite possible route has been proposed, beginning with decarboxylation and concomitant dehydration by the decarboxylase oryM, followed by tautomerization, which may lead to the production of a diene intermediate. Reduction of this diene intermediate could give the known metabolite piliformic acid. On the pathway to oryzine B and oryzine A, however, hydroxylation of the diene by the alpha-ketoglutarate-dependent dioxygenase oryG and lactonisation by the lactonohydrolases oryH or oryL could give oryzine B directly. Finally, enoyl reduction by the dehydrogenase oryD would then convert oryzine B into oryzine A. The chain is Lactonohydrolase oryL from Aspergillus oryzae (strain ATCC 42149 / RIB 40) (Yellow koji mold).